A 101-amino-acid chain; its full sequence is Small ribosomal subunit protein bS18c (101 aa).

Over residues 1–19 (MDKSKRPFRKSKRSFRKRL) the composition is skewed to basic residues. The tract at residues 1 to 23 (MDKSKRPFRKSKRSFRKRLPPIG) is disordered.

The protein belongs to the bacterial ribosomal protein bS18 family. In terms of assembly, part of the 30S ribosomal subunit.

Its subcellular location is the plastid. The protein localises to the chloroplast. This Chloranthus spicatus (Chulantree) protein is Small ribosomal subunit protein bS18c.